The following is a 311-amino-acid chain: Protein translocase subunit SecF (311 aa).

Transmembrane regions (helical) follow at residues 19-39 (AIYASLFLIGVSLVSLFTQGL), 142-162 (MLAMLYAMVAILIYISFRFEL), 166-186 (LGAVLALVHDVVLTMGFFSVL), 192-212 (LVVVAALLTVVGYSLNDTIVV), 245-265 (ITSLTTVLVLIALFVLGGAVI), and 272-292 (LLFGVGIGTYSSIFVASPLVL).

Belongs to the SecD/SecF family. SecF subfamily. As to quaternary structure, forms a complex with SecD. Part of the essential Sec protein translocation apparatus which comprises SecA, SecYEG and auxiliary proteins SecDF-YajC and YidC.

Its subcellular location is the cell inner membrane. Its function is as follows. Part of the Sec protein translocase complex. Interacts with the SecYEG preprotein conducting channel. SecDF uses the proton motive force (PMF) to complete protein translocation after the ATP-dependent function of SecA. The protein is Protein translocase subunit SecF of Magnetococcus marinus (strain ATCC BAA-1437 / JCM 17883 / MC-1).